The primary structure comprises 106 residues: Replication protein A 14 kDa subunit B (106 aa).

Methionine 1 bears the N-acetylmethionine mark.

This sequence belongs to the replication factor A protein 3 family. Component of the heterotrimeric canonical replication protein A complex (RPA).

The protein resides in the nucleus. Its function is as follows. As part of the replication protein A (RPA/RP-A), a single-stranded DNA-binding heterotrimeric complex, may play an essential role in DNA replication, recombination and repair. Binds and stabilizes single-stranded DNA intermediates, preventing complementary DNA reannealing and recruiting different proteins involved in DNA metabolism. This Arabidopsis thaliana (Mouse-ear cress) protein is Replication protein A 14 kDa subunit B (RPA3B).